A 229-amino-acid polypeptide reads, in one-letter code: Ribose-5-phosphate isomerase A (229 aa).

Substrate is bound by residues 28 to 31 (TGST), 85 to 88 (DGAD), and 98 to 101 (KGRG). Glutamate 107 (proton acceptor) is an active-site residue. Residue lysine 125 participates in substrate binding.

Belongs to the ribose 5-phosphate isomerase family. Homodimer.

The enzyme catalyses aldehydo-D-ribose 5-phosphate = D-ribulose 5-phosphate. It functions in the pathway carbohydrate degradation; pentose phosphate pathway; D-ribose 5-phosphate from D-ribulose 5-phosphate (non-oxidative stage): step 1/1. Its function is as follows. Catalyzes the reversible conversion of ribose-5-phosphate to ribulose 5-phosphate. This is Ribose-5-phosphate isomerase A from Thermococcus kodakarensis (strain ATCC BAA-918 / JCM 12380 / KOD1) (Pyrococcus kodakaraensis (strain KOD1)).